We begin with the raw amino-acid sequence, 111 residues long: Photosystem II reaction center Psb28 protein (111 aa).

Belongs to the Psb28 family. In terms of assembly, part of the photosystem II complex.

It localises to the cellular thylakoid membrane. The polypeptide is Photosystem II reaction center Psb28 protein (Nostoc sp. (strain PCC 7120 / SAG 25.82 / UTEX 2576)).